The sequence spans 942 residues: Valine--tRNA ligase (942 aa).

The 'HIGH' region motif lies at Pro43–His53. Residues Lys551–Ser555 carry the 'KMSKS' region motif. Lys554 lines the ATP pocket. Residues Glu876–Leu942 adopt a coiled-coil conformation.

It belongs to the class-I aminoacyl-tRNA synthetase family. ValS type 1 subfamily. In terms of assembly, monomer.

The protein localises to the cytoplasm. The enzyme catalyses tRNA(Val) + L-valine + ATP = L-valyl-tRNA(Val) + AMP + diphosphate. Functionally, catalyzes the attachment of valine to tRNA(Val). As ValRS can inadvertently accommodate and process structurally similar amino acids such as threonine, to avoid such errors, it has a 'posttransfer' editing activity that hydrolyzes mischarged Thr-tRNA(Val) in a tRNA-dependent manner. The polypeptide is Valine--tRNA ligase (Stenotrophomonas maltophilia (strain K279a)).